We begin with the raw amino-acid sequence, 543 residues long: Phosphatidylinositol/phosphatidylcholine transfer protein SFH12 (543 aa).

Residues 120–294 (EIDEVLKYYP…FLGGSCTCAD (175 aa)) form the CRAL-TRIO domain. A disordered region spans residues 316-356 (HNGDHKCSKGSQAENSGEKTIPEEDDSTTEPASEEEKASKE). Positions 490-526 (DKEEMLNAAISRSNVLEQELAATKKALDDSLGRQEEL) form a coiled coil.

It belongs to the SFH family. As to expression, specifically expressed in flowers.

The protein localises to the golgi apparatus membrane. The protein resides in the cell membrane. Its function is as follows. Required for transport of secretory proteins from the Golgi complex. Catalyzes the transfer of phosphatidylinositol and phosphatidylcholine between membranes in vitro. This is Phosphatidylinositol/phosphatidylcholine transfer protein SFH12 (SFH12) from Arabidopsis thaliana (Mouse-ear cress).